Consider the following 135-residue polypeptide: Large ribosomal subunit protein uL22 (135 aa).

The protein belongs to the universal ribosomal protein uL22 family. As to quaternary structure, part of the 50S ribosomal subunit.

This protein binds specifically to 23S rRNA; its binding is stimulated by other ribosomal proteins, e.g. L4, L17, and L20. It is important during the early stages of 50S assembly. It makes multiple contacts with different domains of the 23S rRNA in the assembled 50S subunit and ribosome. Functionally, the globular domain of the protein is located near the polypeptide exit tunnel on the outside of the subunit, while an extended beta-hairpin is found that lines the wall of the exit tunnel in the center of the 70S ribosome. The protein is Large ribosomal subunit protein uL22 of Malacoplasma penetrans (strain HF-2) (Mycoplasma penetrans).